Consider the following 312-residue polypeptide: MEEKPSGPIPDMLATAEPSSSETDKEVLSPAVPAAAPSSSMSEEPGPEQAATPPVWERGGAGGMQQGSSPAPDSCQPGPGPSPGLTSIVSGTSEDLRPPRRRPPPGKQIPCSSPGCCLSFPSVRDLAQHLRTHCPPTQSLEGKLFRCSALSCTETFPSMQELVAHSKLHYKPNRYFKCENCLLRFRTHRSLFKHLHVCAEHAQSPAPPPPPALDREPPAPERPPEVDPASAPGLPFPLLEPFTTPAPAPTGPFLPYLNPAPFGLSPPRLRPFLAAAPGPPASSAAVWKKSQGAGSSPRRPQGGSDAPSGACR.

The interval 1 to 110 (MEEKPSGPIP…RRPPPGKQIP (110 aa)) is disordered. Positions 29 to 48 (SPAVPAAAPSSSMSEEPGPE) are enriched in low complexity. Residues 84–93 (GLTSIVSGTS) show a composition bias toward polar residues. 3 C2H2-type zinc fingers span residues 109 to 133 (IPCS…LRTH), 145 to 169 (FRCS…SKLH), and 176 to 201 (FKCE…CAEH). The tract at residues 203-312 (QSPAPPPPPA…GSDAPSGACR (110 aa)) is disordered. A compositionally biased stretch (basic and acidic residues) spans 213 to 225 (LDREPPAPERPPE). Low complexity-rich tracts occupy residues 227–243 (DPAS…EPFT) and 265–285 (SPPR…SSAA).

Belongs to the krueppel C2H2-type zinc-finger protein family.

Its subcellular location is the nucleus. Functionally, may be involved in transcriptional regulation. The sequence is that of Zinc finger protein 414 (ZNF414) from Homo sapiens (Human).